The primary structure comprises 411 residues: L-cysteine:1D-myo-inositol 2-amino-2-deoxy-alpha-D-glucopyranoside ligase (411 aa).

Position 43 (cysteine 43) interacts with Zn(2+). L-cysteinyl-5'-AMP-binding positions include 43 to 46 (CGIT), threonine 58, and 81 to 83 (NVT). Positions 45–55 (ITPYDATHLGH) match the 'HIGH' region motif. Residues 186–191 (QRGGDP) carry the 'ERGGDP' region motif. Tryptophan 226 is an L-cysteinyl-5'-AMP binding site. Position 230 (cysteine 230) interacts with Zn(2+). An L-cysteinyl-5'-AMP-binding site is contributed by 248-250 (GSD). Histidine 255 serves as a coordination point for Zn(2+). Isoleucine 282 lines the L-cysteinyl-5'-AMP pocket. A 'KMSKS' region motif is present at residues 288–292 (KMSKS).

Belongs to the class-I aminoacyl-tRNA synthetase family. MshC subfamily. As to quaternary structure, monomer. Requires Zn(2+) as cofactor.

It catalyses the reaction 1D-myo-inositol 2-amino-2-deoxy-alpha-D-glucopyranoside + L-cysteine + ATP = 1D-myo-inositol 2-(L-cysteinylamino)-2-deoxy-alpha-D-glucopyranoside + AMP + diphosphate + H(+). Its function is as follows. Catalyzes the ATP-dependent condensation of GlcN-Ins and L-cysteine to form L-Cys-GlcN-Ins. In Mycobacterium marinum (strain ATCC BAA-535 / M), this protein is L-cysteine:1D-myo-inositol 2-amino-2-deoxy-alpha-D-glucopyranoside ligase.